We begin with the raw amino-acid sequence, 271 residues long: Small ribosomal subunit protein uS9m (271 aa).

Residues 1-11 (MFRSLAKLRCF) constitute a mitochondrion transit peptide. The segment at 251 to 271 (KVERKKTGQPKARKKYTWVKR) is disordered. Residues 252 to 271 (VERKKTGQPKARKKYTWVKR) are compositionally biased toward basic residues.

The protein belongs to the universal ribosomal protein uS9 family. As to quaternary structure, component of the mitochondrial small ribosomal subunit (mt-SSU). Mature yeast 74S mitochondrial ribosomes consist of a small (37S) and a large (54S) subunit. The 37S small subunit contains a 15S ribosomal RNA (15S mt-rRNA) and at least 32 different proteins. The 54S large subunit contains a 21S rRNA (21S mt-rRNA) and at least 45 different proteins.

It localises to the mitochondrion. Functionally, component of the mitochondrial ribosome (mitoribosome), a dedicated translation machinery responsible for the synthesis of mitochondrial genome-encoded proteins, including at least some of the essential transmembrane subunits of the mitochondrial respiratory chain. The mitoribosomes are attached to the mitochondrial inner membrane and translation products are cotranslationally integrated into the membrane. The sequence is that of Small ribosomal subunit protein uS9m (mrps9) from Schizosaccharomyces pombe (strain 972 / ATCC 24843) (Fission yeast).